The primary structure comprises 437 residues: Proton/glutamate-aspartate symporter (437 aa).

The Cytoplasmic segment spans residues 1 to 5; sequence MKNIK. A helical transmembrane segment spans residues 6-26; it reads FSLAWQILFAMVLGILLGSYL. The Periplasmic portion of the chain corresponds to 27–50; that stretch reads HYHSDSRDWLVVNLLSPAGDIFIH. A helical transmembrane segment spans residues 51 to 71; sequence LIKMIVVPIVISTLVVGIAGV. The Cytoplasmic segment spans residues 72-84; it reads GDAKQLGRIGAKT. The chain crosses the membrane as a helical span at residues 85–105; that stretch reads IIYFEVITTVAIILGITLANV. At 106 to 159 the chain is on the periplasmic side; the sequence is FQPGAGVDMSQLATVDISKYQSTTEAVQSSSHGIMGTILSLVPTNIVASMAKGE. The chain crosses the membrane as a helical span at residues 160–180; sequence MLPIIFFSVLFGLGLSSLPAT. The Cytoplasmic portion of the chain corresponds to 181–210; that stretch reads HREPLVTVFRSISETMFKVTHMVMRYAPVG. Residues 211–231 traverse the membrane as a helical segment; it reads VFALIAVTVANFGFSSLWPLA. Position 232 (lysine 232) is a topological domain, periplasmic. The helical transmembrane segment at 233 to 253 threads the bilayer; it reads LVLLVHFAILFFALVVLGIVA. At 254–292 the chain is on the cytoplasmic side; the sequence is RLCGLSVWILIRILKDELILAYSTASSESVLPRIIEKME. A helical membrane pass occupies residues 293-313; the sequence is AYGAPVSITSFVVPTGYSFNL. Residues 314-324 are Periplasmic-facing; it reads DGSTLYQSIAA. The chain crosses the membrane as a helical span at residues 325–345; that stretch reads IFIAQLYGIDLSIWQEIILVL. Residues 346–361 are Cytoplasmic-facing; it reads TLMVTSKGIAGVPGVS. A helical transmembrane segment spans residues 362–382; it reads FVVLLATLGSVGIPLEGLAFI. Topologically, residues 383–387 are periplasmic; sequence AGVDR. A helical transmembrane segment spans residues 388–408; sequence ILDMARTALNVVGNALAVLVI. Topologically, residues 409-437 are cytoplasmic; that stretch reads AKWEHKFDRKKALAYEREVLGKFDKTADQ.

This sequence belongs to the dicarboxylate/amino acid:cation symporter (DAACS) (TC 2.A.23) family. GltP subfamily.

It is found in the cell inner membrane. With respect to regulation, glutamate uptake is inhibited by L-cysteate and beta-hydroxyaspartate. Inhibited by the uncoupler carbonylcyanide m-chlorophenylhydrazone (CCCP). Functionally, catalyzes the proton-dependent, binding-protein-independent transport of glutamate and aspartate. This Escherichia coli (strain K12) protein is Proton/glutamate-aspartate symporter.